The sequence spans 107 residues: Putative double-stranded DNA mimic protein YpsIP31758_1954 (107 aa).

The protein belongs to the putative dsDNA mimic protein family.

Functionally, may act as a double-stranded DNA (dsDNA) mimic. Probably regulates the activity of a dsDNA-binding protein. The chain is Putative double-stranded DNA mimic protein YpsIP31758_1954 from Yersinia pseudotuberculosis serotype O:1b (strain IP 31758).